Here is a 267-residue protein sequence, read N- to C-terminus: Ras-related protein Rab-36 (267 aa).

Positions 68, 69, 70, 71, 72, 83, 86, and 89 each coordinate GTP. T71 is a Mg(2+) binding site. Residues 76–94 (RFCKNVFDRDYKATIGVDF) carry the Switch 1 motif. 2 residues coordinate Mg(2+): T89 and D112. Positions 113–132 (TAGQEKFKCIASAYYRGAQV) match the Switch 2 motif. 6 residues coordinate GTP: G115, K172, D174, S203, A204, and K205. Residues 243–267 (GDLIQMEGSPPETQESKRPSSLGCC) form a disordered region. S-geranylgeranyl cysteine attachment occurs at residues C266 and C267.

It belongs to the small GTPase superfamily. Rab family. It depends on Mg(2+) as a cofactor. Ubiquitously present in all tissues examined.

The protein localises to the golgi apparatus membrane. The enzyme catalyses GTP + H2O = GDP + phosphate + H(+). Its activity is regulated as follows. Regulated by guanine nucleotide exchange factors (GEFs) which promote the exchange of bound GDP for free GTP. Regulated by GTPase activating proteins (GAPs) which increase the GTP hydrolysis activity. Inhibited by GDP dissociation inhibitors (GDIs). In terms of biological role, the small GTPases Rab are key regulators of intracellular membrane trafficking, from the formation of transport vesicles to their fusion with membranes. Rabs cycle between an inactive GDP-bound form and an active GTP-bound form that is able to recruit to membranes different sets of downstream effectors directly responsible for vesicle formation, movement, tethering and fusion. This is Ras-related protein Rab-36 from Homo sapiens (Human).